We begin with the raw amino-acid sequence, 393 residues long: Pyrimidine monooxygenase RutA (393 aa).

FMN-binding positions include 79–80, asparagine 145, glutamate 154, 170–171, and serine 220; these read IK and RY.

The protein belongs to the NtaA/SnaA/DszA monooxygenase family. RutA subfamily.

The enzyme catalyses uracil + FMNH2 + NADH + O2 = (Z)-3-ureidoacrylate + FMN + NAD(+) + H2O + H(+). The catalysed reaction is thymine + FMNH2 + NADH + O2 = (Z)-2-methylureidoacrylate + FMN + NAD(+) + H2O + H(+). Catalyzes the pyrimidine ring opening between N-3 and C-4 by an unusual flavin hydroperoxide-catalyzed mechanism, adding oxygen atoms in the process to yield ureidoacrylate peracid, that immediately reacts with FMN forming ureidoacrylate and FMN-N(5)-oxide. The FMN-N(5)-oxide reacts spontaneously with NADH to produce FMN. Requires the flavin reductase RutF to regenerate FMN in vivo. This Escherichia coli O9:H4 (strain HS) protein is Pyrimidine monooxygenase RutA.